The following is a 369-amino-acid chain: Fructose-bisphosphate aldolase 2 (369 aa).

Asp40 provides a ligand contact to dihydroxyacetone phosphate. D-glyceraldehyde 3-phosphate is bound by residues Ser42 and Thr45. Beta-D-fructose 1,6-bisphosphate is bound at residue Arg49. Lys113 contacts D-glyceraldehyde 3-phosphate. Position 152 (Lys152) interacts with dihydroxyacetone phosphate. Glu195 contributes to the D-glyceraldehyde 3-phosphate binding site. Residue Glu195 is the Proton acceptor of the active site. Dihydroxyacetone phosphate is bound by residues Lys237, Ser279, and Gly280. Lys237 functions as the Schiff-base intermediate with dihydroxyacetone phosphate in the catalytic mechanism. Beta-D-fructose 1,6-bisphosphate-binding positions include 279-281 (SGG) and Ser307. Residues Gly309 and Arg310 each coordinate dihydroxyacetone phosphate. Arg310 is a beta-D-fructose 1,6-bisphosphate binding site.

Belongs to the class I fructose-bisphosphate aldolase family.

It is found in the cytoplasm. Its subcellular location is the membrane. The protein localises to the host cell membrane. It carries out the reaction beta-D-fructose 1,6-bisphosphate = D-glyceraldehyde 3-phosphate + dihydroxyacetone phosphate. It participates in carbohydrate degradation; glycolysis; D-glyceraldehyde 3-phosphate and glycerone phosphate from D-glucose: step 4/4. Plays a key role in glycolysis by catalyzing the cleavage of fructose 1,6-bisphosphate into dihydroxyacetone phosphate and glyceraldehyde 3-phosphate. The sequence is that of Fructose-bisphosphate aldolase 2 (ALDO2) from Plasmodium berghei (strain Anka).